The primary structure comprises 176 residues: Xanthine-guanine phosphoribosyltransferase (176 aa).

5-phospho-alpha-D-ribose 1-diphosphate contacts are provided by residues 51-52 (RG), Arg88, and 111-119 (DDLVDSGKT). Arg88 provides a ligand contact to GMP. Residue Asp112 participates in Mg(2+) binding. Residues Asp115 and Ile158 each contribute to the guanine site. Xanthine contacts are provided by Asp115 and Ile158. GMP-binding positions include 115-119 (DSGKT) and 157-158 (WI).

Belongs to the purine/pyrimidine phosphoribosyltransferase family. XGPT subfamily. Homotetramer. The cofactor is Mg(2+).

It is found in the cell inner membrane. It catalyses the reaction GMP + diphosphate = guanine + 5-phospho-alpha-D-ribose 1-diphosphate. The enzyme catalyses XMP + diphosphate = xanthine + 5-phospho-alpha-D-ribose 1-diphosphate. The catalysed reaction is IMP + diphosphate = hypoxanthine + 5-phospho-alpha-D-ribose 1-diphosphate. It functions in the pathway purine metabolism; GMP biosynthesis via salvage pathway; GMP from guanine: step 1/1. Its pathway is purine metabolism; XMP biosynthesis via salvage pathway; XMP from xanthine: step 1/1. Purine salvage pathway enzyme that catalyzes the transfer of the ribosyl-5-phosphate group from 5-phospho-alpha-D-ribose 1-diphosphate (PRPP) to the N9 position of the 6-oxopurines guanine and xanthine to form the corresponding ribonucleotides GMP (guanosine 5'-monophosphate) and XMP (xanthosine 5'-monophosphate), with the release of PPi. To a lesser extent, also acts on hypoxanthine. This is Xanthine-guanine phosphoribosyltransferase from Roseobacter denitrificans (strain ATCC 33942 / OCh 114) (Erythrobacter sp. (strain OCh 114)).